A 1219-amino-acid polypeptide reads, in one-letter code: A disintegrin and metalloproteinase with thrombospondin motifs 18 (1219 aa).

An N-terminal signal peptide occupies residues 1–47; sequence MECALLCLCALRAAGPGPPWGPAGLGRLAKALQLCCFCCASVAVALA. Positions 48-284 are excised as a propeptide; that stretch reads SDSGSSGGSG…EYGGTGRPRR (237 aa). Residues asparagine 151 and asparagine 190 are each glycosylated (N-linked (GlcNAc...) asparagine). Residues 217–248 are disordered; the sequence is YPGSQRTYPGHSPSHTPPASQSQEPEYSHRRW. Over residues 218 to 241 the composition is skewed to polar residues; it reads PGSQRTYPGHSPSHTPPASQSQEP. Residues 293–498 enclose the Peptidase M12B domain; the sequence is LNVETLVVAD…PQAGCLVDEP (206 aa). Intrachain disulfides connect cysteine 369-cysteine 420, cysteine 395-cysteine 402, cysteine 414-cysteine 493, cysteine 453-cysteine 477, cysteine 521-cysteine 546, cysteine 532-cysteine 553, cysteine 541-cysteine 572, cysteine 566-cysteine 577, cysteine 601-cysteine 638, cysteine 605-cysteine 643, and cysteine 616-cysteine 628. Position 436 (histidine 436) interacts with Zn(2+). Residue glutamate 437 is part of the active site. Histidine 440 and histidine 446 together coordinate Zn(2+). A TSP type-1 1 domain is found at 589–644; sequence HGQWSAWSKWSECSRTCGGGVKFQERHCSNPKPQYGGKYCPGSSRIYKLCNINPCP. 4 N-linked (GlcNAc...) asparagine glycosylation sites follow: asparagine 745, asparagine 838, asparagine 865, and asparagine 909. TSP type-1 domains follow at residues 931 to 990, 991 to 1049, 1052 to 1116, and 1121 to 1176; these read CPAY…NSHA, CPPE…GRCP, NRLQ…RTCP, and AVAS…NFCP. Residues 1182 to 1219 enclose the PLAC domain; the sequence is DDPSCVDFFSWCHLVPQHGVCNHKFYGKQCCRSCTRKS.

Requires Zn(2+) as cofactor. In terms of processing, the precursor is cleaved by a furin endopeptidase. Glycosylated. Can be O-fucosylated by POFUT2 on a serine or a threonine residue found within the consensus sequence C1-X(2)-(S/T)-C2-G of the TSP type-1 repeat domains where C1 and C2 are the first and second cysteine residue of the repeat, respectively. Fucosylated repeats can then be further glycosylated by the addition of a beta-1,3-glucose residue by the glucosyltransferase, B3GALTL. Fucosylation mediates the efficient secretion of ADAMTS family members. Can also be C-glycosylated with one or two mannose molecules on tryptophan residues within the consensus sequence W-X-X-W of the TPRs, and N-glycosylated. These other glycosylations can also facilitate secretion.

It localises to the secreted. The protein localises to the extracellular space. Its subcellular location is the extracellular matrix. This Mus musculus (Mouse) protein is A disintegrin and metalloproteinase with thrombospondin motifs 18 (Adamts18).